Here is a 624-residue protein sequence, read N- to C-terminus: Chaperone protein HtpG (624 aa).

Residues 1–336 (MKGQETRGFQ…SNDLPLNVSR (336 aa)) are a; substrate-binding. Residues 337–552 (EILQDSSITR…NDEMSTQMAK (216 aa)) form a b region. Residues 553–624 (LFAAAGQAVP…IRRMNQLLVS (72 aa)) form a c region.

It belongs to the heat shock protein 90 family. In terms of assembly, homodimer.

The protein localises to the cytoplasm. Its function is as follows. Molecular chaperone. Has ATPase activity. The polypeptide is Chaperone protein HtpG (Cronobacter sakazakii (strain ATCC BAA-894) (Enterobacter sakazakii)).